The chain runs to 261 residues: MNRIDGREFNELRPIKITRNFNKFAEGSVLIEMGETKVICTASIEDKVPPFQKGTGKGWITSEYGMLPRATEVRNPREVTKGRPSGRTMEIQRLIGRSLRAVVDLEALGERTIWIDCDVIQADGGTRTASITGSFIALADALNKLVEKGELQKIPLKSFVAAVSVGIVEGNKLLDLSFQEDANALVDMNVVMTDKGEIVEIQGTGEGGPFSRQNFEELLDLAAHGIEQIIKIQKEVLSDIADKIGVENVEVDSGNSQSQQG.

Phosphate is bound by residues R87 and 125 to 127 (GTR).

This sequence belongs to the RNase PH family. In terms of assembly, homohexameric ring arranged as a trimer of dimers.

It catalyses the reaction tRNA(n+1) + phosphate = tRNA(n) + a ribonucleoside 5'-diphosphate. Phosphorolytic 3'-5' exoribonuclease that plays an important role in tRNA 3'-end maturation. Removes nucleotide residues following the 3'-CCA terminus of tRNAs; can also add nucleotides to the ends of RNA molecules by using nucleoside diphosphates as substrates, but this may not be physiologically important. Probably plays a role in initiation of 16S rRNA degradation (leading to ribosome degradation) during starvation. The polypeptide is Ribonuclease PH (Caldanaerobacter subterraneus subsp. tengcongensis (strain DSM 15242 / JCM 11007 / NBRC 100824 / MB4) (Thermoanaerobacter tengcongensis)).